Consider the following 452-residue polypeptide: Zinc finger protein GAI-ASSOCIATED FACTOR 1 (452 aa).

Over residues 1 to 32 the composition is skewed to polar residues; it reads MPVDLDNSSTVSGEASVSISSTGNQNPLPNST. The interval 1–47 is disordered; it reads MPVDLDNSSTVSGEASVSISSTGNQNPLPNSTGKKKRNLPGMPDPES. Position 53 is a phosphoserine (serine 53). 2 C2H2-type zinc fingers span residues 63–85 and 104–134; these read FVCE…RRGH and YVCP…CRKH. The Nuclear localization signal motif lies at 126–133; sequence IKKHFCRK. The C2H2-type 2; degenerate zinc finger occupies 139 to 162; that stretch reads WKCDKCSKKYAVQSDWKAHSKICG. Residues cysteine 141, cysteine 144, histidine 157, cysteine 161, cysteine 168, cysteine 170, histidine 183, and cysteine 187 each contribute to the Zn(2+) site. The CCHC-type 2; atypical zinc-finger motif lies at 166–189; sequence YKCDCGTLFSRRDSFITHRAFCDA. The interval 176–188 is SHR-binding; it reads RRDSFITHRAFCD. The disordered stretch occupies residues 196–254; it reads RSHHSQSKKQNPEILTRKNPVPNPVPAPVDTESAKIKSSSTLTIKQSESPKTPPEIVQE. The span at 231–245 shows a compositional bias: polar residues; it reads IKSSSTLTIKQSESP.

In terms of assembly, interacts with the DELLA proteins (e.g. GAI/RGA2, RGA, RGL1, RGL2 and RGLG3), acting as coactivators and with TPR1 and TPR4, acting as a corepressors, at the promoter of GA20OX2 gene. As to expression, observed in vegetative tissues. Mainly expressed in hypocotyls, petioles, shoot apices, root tips, and trichomes, and, at low levels, in leaves, stems and flowers.

It is found in the nucleus. Its activity is regulated as follows. Transcription activation is repressed by gibberellic acid GA(3) in the presence of TPR4. Transcription factor that acts as a positive regulator of gibberellin (GA) action, homeostasis and signaling. GA converts the GAF1 complex from transcriptional activator to repressor via the degradation of DELLA proteins. The polypeptide is Zinc finger protein GAI-ASSOCIATED FACTOR 1 (Arabidopsis thaliana (Mouse-ear cress)).